The primary structure comprises 210 residues: Redox-sensing transcriptional repressor Rex (210 aa).

A DNA-binding region (H-T-H motif) is located at residues 17–56; that stretch reads SYLHLVKKAEADKLEYISGTVIAEELELEPIQVRKDLTIT. NAD(+) is bound at residue 91–96; it reads GAGSLG.

Belongs to the transcriptional regulatory Rex family. As to quaternary structure, homodimer.

The protein localises to the cytoplasm. In terms of biological role, modulates transcription in response to changes in cellular NADH/NAD(+) redox state. The protein is Redox-sensing transcriptional repressor Rex of Treponema denticola (strain ATCC 35405 / DSM 14222 / CIP 103919 / JCM 8153 / KCTC 15104).